Here is a 707-residue protein sequence, read N- to C-terminus: MMFDKHVKTFQYGNQTVTLETGEIARQAAAAVKVSMGDTVVLVAVTTNKEVKEGQDFFPLTVDYLERTYAAGKIPGGFFKREGKQSEKEILTSRLIDRPIRPLFPEGFYHDIQIVAMVVSVDPEIDSDIPAMLGASAALVLSGVPFAGPIGAARVGYVNGVYVLNPTKAELAKSQLDLVVAGTSKAVLMVESEAKILPEDVMLGAVVYGHDQMQVAINAINEFADEVNPELWDWKAPETNEELVAKVRGIAGETIKEAFKIRQKQARSAKLDEAWSAVKEALITEETDTLAANEIKGIFKHLEADVVRSQILDGQPRIDGRDTRTVRPLNIQTSVLPRTHGSALFTRGETQALAVATLGTSRDEQIIDALSGEYTDRFMLHYNFPPYSTGEVGRMGAPKRREIGHGRLAKRALLAVLPKPEDFSYTMRVVSEITESNGSSSMASVCGGCLSLLSAGVPLKAHVAGIAMGLILEGNKFAVLTDILGDEDHLGDMDFKVAGTTEGVTALQMDIKIQGITKEIMQIALAQAKEARLHILDQMKAAVAGPQELSAHAPRLFTMKINQDKIREVIGKGGETIRSITAETGTEINIAEDGTITIAATTQEAGDAAKKRIEQITAEVEVGKVYEGTVVKILDNNVGAIVSVMPGKDGLVHISQIAHERVRNVGDYLQVGQVVNVKALEVDDRGRVRLSIKALLDAPAREENAAE.

Residues D488 and D494 each contribute to the Mg(2+) site. Residues 554-613 (PRLFTMKINQDKIREVIGKGGETIRSITAETGTEINIAEDGTITIAATTQEAGDAAKKRI) form the KH domain. Residues 623-693 (GKVYEGTVVK…DRGRVRLSIK (71 aa)) form the S1 motif domain.

Belongs to the polyribonucleotide nucleotidyltransferase family. Requires Mg(2+) as cofactor.

It localises to the cytoplasm. It catalyses the reaction RNA(n+1) + phosphate = RNA(n) + a ribonucleoside 5'-diphosphate. Functionally, involved in mRNA degradation. Catalyzes the phosphorolysis of single-stranded polyribonucleotides processively in the 3'- to 5'-direction. This is Polyribonucleotide nucleotidyltransferase from Neisseria meningitidis serogroup B (strain ATCC BAA-335 / MC58).